Reading from the N-terminus, the 70-residue chain is Large ribosomal subunit protein uL29 (70 aa).

Belongs to the universal ribosomal protein uL29 family.

The protein is Large ribosomal subunit protein uL29 of Prochlorococcus marinus (strain MIT 9313).